A 299-amino-acid polypeptide reads, in one-letter code: Phosphoribosylaminoimidazole-succinocarboxamide synthase (299 aa).

It belongs to the SAICAR synthetase family.

The catalysed reaction is 5-amino-1-(5-phospho-D-ribosyl)imidazole-4-carboxylate + L-aspartate + ATP = (2S)-2-[5-amino-1-(5-phospho-beta-D-ribosyl)imidazole-4-carboxamido]succinate + ADP + phosphate + 2 H(+). Its pathway is purine metabolism; IMP biosynthesis via de novo pathway; 5-amino-1-(5-phospho-D-ribosyl)imidazole-4-carboxamide from 5-amino-1-(5-phospho-D-ribosyl)imidazole-4-carboxylate: step 1/2. This chain is Phosphoribosylaminoimidazole-succinocarboxamide synthase, found in Maridesulfovibrio salexigens (strain ATCC 14822 / DSM 2638 / NCIMB 8403 / VKM B-1763) (Desulfovibrio salexigens).